Here is a 208-residue protein sequence, read N- to C-terminus: Dephospho-CoA kinase (208 aa).

A DPCK domain is found at 8 to 208 (LVGVTGGIGS…VYQSLLTVVE (201 aa)). 16–21 (GSGKST) lines the ATP pocket.

This sequence belongs to the CoaE family.

It localises to the cytoplasm. It catalyses the reaction 3'-dephospho-CoA + ATP = ADP + CoA + H(+). It functions in the pathway cofactor biosynthesis; coenzyme A biosynthesis; CoA from (R)-pantothenate: step 5/5. In terms of biological role, catalyzes the phosphorylation of the 3'-hydroxyl group of dephosphocoenzyme A to form coenzyme A. This chain is Dephospho-CoA kinase, found in Chlorobaculum tepidum (strain ATCC 49652 / DSM 12025 / NBRC 103806 / TLS) (Chlorobium tepidum).